Reading from the N-terminus, the 341-residue chain is LIM and senescent cell antigen-like-containing domain protein 2 (341 aa).

LIM zinc-binding domains are found at residues 13–74 (AMCQ…LFAP), 76–133 (CGFC…EKAK), 138–195 (FICQ…KMGI), 196–255 (PICG…LFGD), and 256–315 (VCYN…FPLE). A Phosphoserine modification is found at serine 328.

As to quaternary structure, interacts with integrin-linked protein kinase 1 (ILK) via the first LIM domain, and in competition with LIMS1. Part of the heterotrimeric IPP complex composed of integrin-linked kinase (ILK), LIMS1 or LIMS2, and PARVA. Interacts with TGFB1I1. As to expression, detected in heart, lung, kidney, liver, urinary bladder, fat, skin, skeletal muscle, uterus, large intestine and testis.

Its subcellular location is the cell junction. The protein resides in the focal adhesion. The protein localises to the cell membrane. Functionally, adapter protein in a cytoplasmic complex linking beta-integrins to the actin cytoskeleton, bridges the complex to cell surface receptor tyrosine kinases and growth factor receptors. This chain is LIM and senescent cell antigen-like-containing domain protein 2 (Lims2), found in Mus musculus (Mouse).